A 503-amino-acid chain; its full sequence is Endoglycoceramidase (503 aa).

Residues 1-21 (MAETQPLVFVLMSISAILTAG) form the signal peptide. 3 N-linked (GlcNAc...) asparagine glycosylation sites follow: N72, N108, and N205. The active-site Proton donor is E239. Residues N307, N409, and N485 are each glycosylated (N-linked (GlcNAc...) asparagine).

This sequence belongs to the glycosyl hydrolase 5 (cellulase A) family.

The protein resides in the secreted. Its subcellular location is the nematocyst. The enzyme catalyses an oligoglycosyl-(1-&gt;4)-beta-D-glucosyl-(1&lt;-&gt;1)-ceramide + H2O = an oligoglycosyl-(1-&gt;4)-D-glucose + an N-acyl-sphingoid base. Its activity is regulated as follows. Completely inhibited by Hg(2+). Cu(2+) and zinc have no effect on enzyme activity. Lithium, potassium, manganese, Ni(2+), calcium, magnesium and EDTA have no significant effect on enzyme activity. Enzyme requires presence of detergents such as Triton X-100 and Lubrol PX for the hydrolysis of glycosphingolipids. Taurodeoxycholate strongly inhibits the enzyme activity and SDS completely inhibits the enzyme activity. In terms of biological role, hydrolysis of the glycosidic linkage between oligosaccharides and ceramides of glycosphingolipids, especially b-series polysialogangliosides. The polypeptide is Endoglycoceramidase (Cyanea nozakii (Jellyfish)).